The primary structure comprises 127 residues: Evasin P467 (127 aa).

The first 21 residues, M1–G21, serve as a signal peptide directing secretion. 4 disulfide bridges follow: C42/C63, C59/C100, C76/C105, and C95/C114. 2 N-linked (GlcNAc...) asparagine glycosylation sites follow: N49 and N94.

The protein resides in the secreted. In terms of biological role, salivary chemokine-binding protein which binds to host chemokines CCL1, CCL2, CCL3 and CCL5. This is Evasin P467 from Rhipicephalus pulchellus (Yellow backed tick).